The sequence spans 158 residues: Dysbindin domain-containing protein 1 (158 aa).

Disordered stretches follow at residues 1 to 50 (MEPP…VPAP) and 93 to 158 (ADSD…PQED). Ser-95 and Ser-119 each carry phosphoserine. Over residues 125-141 (TRAEQSHEKQPLGDPER) the composition is skewed to basic and acidic residues.

This sequence belongs to the dysbindin family.

The sequence is that of Dysbindin domain-containing protein 1 (DBNDD1) from Homo sapiens (Human).